We begin with the raw amino-acid sequence, 444 residues long: Transcriptional regulatory protein GlrR (444 aa).

In terms of domain architecture, Response regulatory spans 7-121 (HLLLVDDDPG…ALYQAIDDAL (115 aa)). Aspartate 56 carries the 4-aspartylphosphate modification. A Sigma-54 factor interaction domain is found at 136–366 (IVTRSPLMLR…VNVIEQCVAL (231 aa)). ATP is bound by residues 164–171 (GQSGTGKE) and 227–236 (AEGGTLFLDE). Residues 414–433 (VTHAARMAGRNRTEFYKLLS) constitute a DNA-binding region (H-T-H motif).

Phosphorylated by GlrK.

The protein resides in the cytoplasm. Its function is as follows. Member of the two-component regulatory system GlrR/GlrK that up-regulates transcription of the glmY sRNA when cells enter the stationary growth phase. Regulates glmY transcription by binding to three conserved sites in the purL-glmY intergenic region. The chain is Transcriptional regulatory protein GlrR (glrR) from Escherichia coli (strain K12).